A 137-amino-acid chain; its full sequence is Small ribosomal subunit protein uS9 (137 aa).

It belongs to the universal ribosomal protein uS9 family.

This chain is Small ribosomal subunit protein uS9, found in Picosynechococcus sp. (strain ATCC 27264 / PCC 7002 / PR-6) (Agmenellum quadruplicatum).